Here is a 299-residue protein sequence, read N- to C-terminus: Phosphatidylserine decarboxylase proenzyme (299 aa).

Residues Asp115, His171, and Ser258 each act as charge relay system; for autoendoproteolytic cleavage activity in the active site. Ser258 serves as the catalytic Schiff-base intermediate with substrate; via pyruvic acid; for decarboxylase activity. Ser258 is modified (pyruvic acid (Ser); by autocatalysis).

It belongs to the phosphatidylserine decarboxylase family. PSD-B subfamily. Prokaryotic type II sub-subfamily. In terms of assembly, heterodimer of a large membrane-associated beta subunit and a small pyruvoyl-containing alpha subunit. The cofactor is pyruvate. In terms of processing, is synthesized initially as an inactive proenzyme. Formation of the active enzyme involves a self-maturation process in which the active site pyruvoyl group is generated from an internal serine residue via an autocatalytic post-translational modification. Two non-identical subunits are generated from the proenzyme in this reaction, and the pyruvate is formed at the N-terminus of the alpha chain, which is derived from the carboxyl end of the proenzyme. The autoendoproteolytic cleavage occurs by a canonical serine protease mechanism, in which the side chain hydroxyl group of the serine supplies its oxygen atom to form the C-terminus of the beta chain, while the remainder of the serine residue undergoes an oxidative deamination to produce ammonia and the pyruvoyl prosthetic group on the alpha chain. During this reaction, the Ser that is part of the protease active site of the proenzyme becomes the pyruvoyl prosthetic group, which constitutes an essential element of the active site of the mature decarboxylase.

It localises to the cell membrane. The catalysed reaction is a 1,2-diacyl-sn-glycero-3-phospho-L-serine + H(+) = a 1,2-diacyl-sn-glycero-3-phosphoethanolamine + CO2. Its pathway is phospholipid metabolism; phosphatidylethanolamine biosynthesis; phosphatidylethanolamine from CDP-diacylglycerol: step 2/2. In terms of biological role, catalyzes the formation of phosphatidylethanolamine (PtdEtn) from phosphatidylserine (PtdSer). This is Phosphatidylserine decarboxylase proenzyme from Chlamydia caviae (strain ATCC VR-813 / DSM 19441 / 03DC25 / GPIC) (Chlamydophila caviae).